The following is a 440-amino-acid chain: Glutamate--tRNA ligase 2 (440 aa).

Residues 8–18 carry the 'HIGH' region motif; it reads PSPTGYLHVGN. The 'KMSKS' region signature appears at 239–243; sequence ALSKR. K242 serves as a coordination point for ATP.

This sequence belongs to the class-I aminoacyl-tRNA synthetase family. Glutamate--tRNA ligase type 1 subfamily. Monomer.

It localises to the cytoplasm. The enzyme catalyses tRNA(Glu) + L-glutamate + ATP = L-glutamyl-tRNA(Glu) + AMP + diphosphate. In terms of biological role, catalyzes the attachment of glutamate to tRNA(Glu) in a two-step reaction: glutamate is first activated by ATP to form Glu-AMP and then transferred to the acceptor end of tRNA(Glu). The polypeptide is Glutamate--tRNA ligase 2 (Dinoroseobacter shibae (strain DSM 16493 / NCIMB 14021 / DFL 12)).